Here is a 380-residue protein sequence, read N- to C-terminus: Cytochrome b (380 aa).

A run of 4 helical transmembrane segments spans residues 34–54 (FGSLLAMCLATQILTGLLLAM), 78–99 (WLIRNLHANGASFFFICIFLHI), 114–134 (WNTGVVLLLTLMATAFVGYVL), and 179–199 (FFALHFLLPFMIAGITITHLM). Positions 84 and 98 each coordinate heme b. The heme b site is built by His183 and His197. Residue His202 participates in a ubiquinone binding. 4 helical membrane passes run 227 to 247 (LKDILGLTLMLTPLLTLALFS), 289 to 309 (LGGVLALAASVLILLLIPFLH), 321 to 341 (LSQTLFWLLVANLLVLTWVGS), and 348 to 368 (FIIIGQMASFSYFTILLILFP).

Belongs to the cytochrome b family. The cytochrome bc1 complex contains 11 subunits: 3 respiratory subunits (MT-CYB, CYC1 and UQCRFS1), 2 core proteins (UQCRC1 and UQCRC2) and 6 low-molecular weight proteins (UQCRH/QCR6, UQCRB/QCR7, UQCRQ/QCR8, UQCR10/QCR9, UQCR11/QCR10 and a cleavage product of UQCRFS1). This cytochrome bc1 complex then forms a dimer. It depends on heme b as a cofactor.

The protein localises to the mitochondrion inner membrane. In terms of biological role, component of the ubiquinol-cytochrome c reductase complex (complex III or cytochrome b-c1 complex) that is part of the mitochondrial respiratory chain. The b-c1 complex mediates electron transfer from ubiquinol to cytochrome c. Contributes to the generation of a proton gradient across the mitochondrial membrane that is then used for ATP synthesis. This is Cytochrome b (MT-CYB) from Tragopan satyra (Satyr tragopan).